Consider the following 71-residue polypeptide: UPF0435 protein BPUM_0734 (71 aa).

The protein belongs to the UPF0435 family.

In Bacillus pumilus (strain SAFR-032), this protein is UPF0435 protein BPUM_0734.